Here is a 253-residue protein sequence, read N- to C-terminus: Hydroxyacylglutathione hydrolase (253 aa).

Residues His54, His56, Asp58, His59, His112, Asp131, and His169 each coordinate Zn(2+).

This sequence belongs to the metallo-beta-lactamase superfamily. Glyoxalase II family. In terms of assembly, monomer. Zn(2+) is required as a cofactor.

It carries out the reaction an S-(2-hydroxyacyl)glutathione + H2O = a 2-hydroxy carboxylate + glutathione + H(+). It functions in the pathway secondary metabolite metabolism; methylglyoxal degradation; (R)-lactate from methylglyoxal: step 2/2. Functionally, thiolesterase that catalyzes the hydrolysis of S-D-lactoyl-glutathione to form glutathione and D-lactic acid. In Bartonella quintana (strain Toulouse) (Rochalimaea quintana), this protein is Hydroxyacylglutathione hydrolase.